The following is a 395-amino-acid chain: Elongation factor Tu (395 aa).

The tr-type G domain occupies 10 to 204 (KPHLNIGTIG…AVDTWIELPE (195 aa)). Residues 19–26 (GHVDHGKT) form a G1 region. Position 19–26 (19–26 (GHVDHGKT)) interacts with GTP. Mg(2+) is bound at residue Thr-26. A G2 region spans residues 60–64 (GITIN). The G3 stretch occupies residues 81 to 84 (DCPG). Residues 81–85 (DCPGH) and 136–139 (NKVD) contribute to the GTP site. The tract at residues 136 to 139 (NKVD) is G4. A G5 region spans residues 174 to 176 (SAL).

It belongs to the TRAFAC class translation factor GTPase superfamily. Classic translation factor GTPase family. EF-Tu/EF-1A subfamily. Monomer.

It localises to the cytoplasm. It catalyses the reaction GTP + H2O = GDP + phosphate + H(+). Its function is as follows. GTP hydrolase that promotes the GTP-dependent binding of aminoacyl-tRNA to the A-site of ribosomes during protein biosynthesis. In Christiangramia forsetii (strain DSM 17595 / CGMCC 1.15422 / KT0803) (Gramella forsetii), this protein is Elongation factor Tu.